The primary structure comprises 399 residues: Phosphoglycerate kinase (399 aa).

Residues 21 to 23, Arg-36, 59 to 62, Arg-120, and Arg-158 contribute to the substrate site; these read DFN and HLGR. Residues Lys-209, Gly-297, Glu-328, and 355–358 each bind ATP; that span reads GGDS.

The protein belongs to the phosphoglycerate kinase family. Monomer.

The protein resides in the cytoplasm. The catalysed reaction is (2R)-3-phosphoglycerate + ATP = (2R)-3-phospho-glyceroyl phosphate + ADP. It participates in carbohydrate degradation; glycolysis; pyruvate from D-glyceraldehyde 3-phosphate: step 2/5. In Streptococcus thermophilus (strain ATCC BAA-250 / LMG 18311), this protein is Phosphoglycerate kinase.